A 223-amino-acid chain; its full sequence is TMF-regulated nuclear protein 1 (223 aa).

2 disordered regions span residues 1–84 (MPGC…GPAG) and 196–223 (GRLRRGQGPEPDSPFRRSPPRGPASPQR). Residues 21–54 (GSPPPPPREPLPSLQPPSPSPTSTPTPTKSPPLP) show a composition bias toward pro residues. Gly residues predominate over residues 73–84 (ASGGSGGAGPAG).

As to quaternary structure, interacts with TMF1; may regulate TRNP1 proteasomal degradation. In terms of processing, ubiquitinated, leading to its degradation by the proteasome. As to expression, expressed in brain and kidney (at protein level). Also detected in spleen and intestine.

Its subcellular location is the nucleus. In terms of biological role, DNA-binding factor that regulates the expression of a subset of genes and plays a key role in tangential, radial, and lateral expansion of the brain neocortex. Regulates neural stem cells proliferation and the production of intermediate neural progenitors and basal radial glial cells affecting the process of cerebral cortex gyrification. May control the proliferation rate of cells by regulating their progression through key cell-cycle transition points. In Mus musculus (Mouse), this protein is TMF-regulated nuclear protein 1 (Trnp1).